Consider the following 32-residue polypeptide: Photosystem II reaction center protein Z (32 aa).

The chain crosses the membrane as a helical span at residues 9–29; sequence IIFSGSLIWVFLLIIVGFLNY.

Belongs to the PsbZ family. In terms of assembly, PSII is composed of 1 copy each of membrane proteins PsbA, PsbB, PsbC, PsbD, PsbE, PsbF, PsbH, PsbI, PsbJ, PsbK, PsbL, PsbM, PsbT, PsbY, PsbZ, Psb30/Ycf12, at least 3 peripheral proteins of the oxygen-evolving complex and a large number of cofactors. It forms dimeric complexes.

The protein localises to the plastid. Its subcellular location is the chloroplast thylakoid membrane. May control the interaction of photosystem II (PSII) cores with the light-harvesting antenna, regulates electron flow through the 2 photosystem reaction centers. PSII is a light-driven water plastoquinone oxidoreductase, using light energy to abstract electrons from H(2)O, generating a proton gradient subsequently used for ATP formation. The chain is Photosystem II reaction center protein Z from Euglena myxocylindracea.